The chain runs to 188 residues: Adenylate kinase (188 aa).

Residue 10-15 (GCGKGT) coordinates ATP. Residues 30 to 59 (STGDMLRHARAAGTELGRRVAAIMDGGNLV) are NMP. AMP contacts are provided by residues Thr31, Arg36, 57 to 59 (NLV), 85 to 88 (GFPR), and Gln92. The LID stretch occupies residues 126-136 (KRAEEEGRPDD). Arg127 is a binding site for ATP. Residues Arg133 and Arg144 each coordinate AMP. Residue Gly172 participates in ATP binding.

The protein belongs to the adenylate kinase family. As to quaternary structure, monomer.

It localises to the cytoplasm. The enzyme catalyses AMP + ATP = 2 ADP. Its pathway is purine metabolism; AMP biosynthesis via salvage pathway; AMP from ADP: step 1/1. Catalyzes the reversible transfer of the terminal phosphate group between ATP and AMP. Plays an important role in cellular energy homeostasis and in adenine nucleotide metabolism. In Maricaulis maris (strain MCS10) (Caulobacter maris), this protein is Adenylate kinase.